Here is a 37-residue protein sequence, read N- to C-terminus: Esculentin-2SE (37 aa).

C31 and C37 are oxidised to a cystine.

Expressed by the skin glands.

The protein localises to the secreted. Mast cell degranulating peptide. Causes histamine release from rat peritoneal mast cells in vitro. Has antibacterial activity against the Gram-negative bacterium E.coli K12 and Gram-positive bacterium M.luteus NCT C2665. The protein is Esculentin-2SE of Lithobates sevosus (Dusky gopher frog).